A 180-amino-acid polypeptide reads, in one-letter code: Large ribosomal subunit protein uL5 (180 aa).

Belongs to the universal ribosomal protein uL5 family. Part of the 50S ribosomal subunit; part of the 5S rRNA/L5/L18/L25 subcomplex. Contacts the 5S rRNA and the P site tRNA. Forms a bridge to the 30S subunit in the 70S ribosome.

Its function is as follows. This is one of the proteins that bind and probably mediate the attachment of the 5S RNA into the large ribosomal subunit, where it forms part of the central protuberance. In the 70S ribosome it contacts protein S13 of the 30S subunit (bridge B1b), connecting the 2 subunits; this bridge is implicated in subunit movement. Contacts the P site tRNA; the 5S rRNA and some of its associated proteins might help stabilize positioning of ribosome-bound tRNAs. The polypeptide is Large ribosomal subunit protein uL5 (Xanthomonas axonopodis pv. citri (strain 306)).